A 1192-amino-acid polypeptide reads, in one-letter code: Protein pangolin, isoform J (1192 aa).

Positions leucine 351 to glutamate 357 match the Nuclear localization signal motif. Residues alanine 691–histidine 713 form a disordered region. Residues isoleucine 714–serine 782 constitute a DNA-binding region (HMG box). Disordered stretches follow at residues valine 790–lysine 812, proline 847–threonine 916, glutamine 955–valine 986, and glutamine 1136–serine 1192. Over residues serine 862–aspartate 871 the composition is skewed to acidic residues. 2 stretches are compositionally biased toward low complexity: residues serine 898 to serine 915 and proline 957 to valine 986. Polar residues-rich tracts occupy residues arginine 1140–serine 1162 and serine 1170–serine 1192.

This sequence belongs to the TCF/LEF family. In terms of assembly, binds to the beta-catenin homolog arm or to gro.

The protein localises to the nucleus. Segment polarity protein. Functions together with arm to transduce the Wingless (Wg) signal in embryos and in developing adult tissues. Acts as a transcriptional activator, but in the absence of arm, it binds to gro and acts as a transcriptional repressor of wg-responsive genes. The chain is Protein pangolin, isoform J from Drosophila melanogaster (Fruit fly).